We begin with the raw amino-acid sequence, 232 residues long: Large ribosomal subunit protein uL1 (232 aa).

Belongs to the universal ribosomal protein uL1 family. As to quaternary structure, part of the 50S ribosomal subunit.

In terms of biological role, binds directly to 23S rRNA. The L1 stalk is quite mobile in the ribosome, and is involved in E site tRNA release. Protein L1 is also a translational repressor protein, it controls the translation of the L11 operon by binding to its mRNA. The chain is Large ribosomal subunit protein uL1 from Chlamydia trachomatis serovar L2 (strain ATCC VR-902B / DSM 19102 / 434/Bu).